Consider the following 154-residue polypeptide: 3-hydroxyacyl-[acyl-carrier-protein] dehydratase FabZ (154 aa).

Residue H54 is part of the active site.

Belongs to the thioester dehydratase family. FabZ subfamily.

It localises to the cytoplasm. It catalyses the reaction a (3R)-hydroxyacyl-[ACP] = a (2E)-enoyl-[ACP] + H2O. In terms of biological role, involved in unsaturated fatty acids biosynthesis. Catalyzes the dehydration of short chain beta-hydroxyacyl-ACPs and long chain saturated and unsaturated beta-hydroxyacyl-ACPs. The chain is 3-hydroxyacyl-[acyl-carrier-protein] dehydratase FabZ from Chlamydia abortus (strain DSM 27085 / S26/3) (Chlamydophila abortus).